The chain runs to 90 residues: Probable Fe(2+)-trafficking protein (90 aa).

Belongs to the Fe(2+)-trafficking protein family.

Functionally, could be a mediator in iron transactions between iron acquisition and iron-requiring processes, such as synthesis and/or repair of Fe-S clusters in biosynthetic enzymes. This chain is Probable Fe(2+)-trafficking protein, found in Nitrosococcus oceani (strain ATCC 19707 / BCRC 17464 / JCM 30415 / NCIMB 11848 / C-107).